Here is a 93-residue protein sequence, read N- to C-terminus: Small ribosomal subunit protein uS19c (93 aa).

The protein belongs to the universal ribosomal protein uS19 family.

Its subcellular location is the plastid. It localises to the chloroplast. Protein S19 forms a complex with S13 that binds strongly to the 16S ribosomal RNA. In Tetradesmus obliquus (Green alga), this protein is Small ribosomal subunit protein uS19c.